A 543-amino-acid polypeptide reads, in one-letter code: Chaperonin GroEL (543 aa).

ATP is bound by residues 29–32, 86–90, Gly413, 476–478, and Asp492; these read TLGP, DGTTT, and NAA.

Belongs to the chaperonin (HSP60) family. Forms a cylinder of 14 subunits composed of two heptameric rings stacked back-to-back. Interacts with the co-chaperonin GroES.

It is found in the cytoplasm. The enzyme catalyses ATP + H2O + a folded polypeptide = ADP + phosphate + an unfolded polypeptide.. Functionally, together with its co-chaperonin GroES, plays an essential role in assisting protein folding. The GroEL-GroES system forms a nano-cage that allows encapsulation of the non-native substrate proteins and provides a physical environment optimized to promote and accelerate protein folding. This chain is Chaperonin GroEL, found in Streptococcus pyogenes serotype M18 (strain MGAS8232).